The chain runs to 296 residues: Homoserine kinase (296 aa).

84–94 (PLARGLGSSSS) contributes to the ATP binding site.

This sequence belongs to the GHMP kinase family. Homoserine kinase subfamily.

The protein resides in the cytoplasm. The catalysed reaction is L-homoserine + ATP = O-phospho-L-homoserine + ADP + H(+). It functions in the pathway amino-acid biosynthesis; L-threonine biosynthesis; L-threonine from L-aspartate: step 4/5. Its function is as follows. Catalyzes the ATP-dependent phosphorylation of L-homoserine to L-homoserine phosphate. The protein is Homoserine kinase (thrB) of Lactococcus lactis subsp. cremoris (Streptococcus cremoris).